Here is a 468-residue protein sequence, read N- to C-terminus: MSKTYYIISTNDYFDPINLSIKDGGEKTIDIIDCERYTLIDCIIFFCKKESFVIEIIVPDFLTKDKLLCDSENLSLCVVNNIYYMNDISVFDSMSLEKSTLKSLMNWAVKNNYKVLLQKYLDNQNIKIYDLLACGISNSNVCDNILELLLSYCKYFQENETMFLVSFCLEMHRIDIAKTLIMYNSYPSVINKSLNFASKSNMSELAIFLVDNGAEINCDHILCFIRIGDIDTVLYMLCRYDVQKLIDRCHFDLVEAVFNSGSLEMIETFIDFGMKINSKVYQHLKYDSKDTYEILRILLAREIYPRKCSDVLKNAAHICSIDVLKILVDFEFNQKSFDNALVSTINAGKFKNAEYLLFSGANINFNNMPTNCMFKINFQTIKFLIDNNFDLEIHGTLILNKSLLNGYYDCANILIENGVKFSLTKSELLKIYSDFQNTHHGQIDPELNINSLTSDELENLIYIDIVNK.

ANK repeat units follow at residues 12-41, 189-218, 249-278, 336-365, 367-393, and 394-423; these read DYFD…TLID, VINK…EINC, CHFD…KINS, SFDN…NINF, NMPT…DLEI, and HGTL…KFSL.

This chain is Putative ankyrin repeat protein R580, found in Acanthamoeba polyphaga (Amoeba).